The chain runs to 509 residues: MVDGVMILPVLIMIALPSPSMEDEKPKVNPKLYMCVCEGLSCGNEDHCEGQQCFSSLSINDGFHVYQKGCFQVYEQGKMTCKTPPSPGQAVECCQGDWCNRNITAQLPTKGKSFPGTQNFHLEVGLIILSVVFAVCLLACLLGVALRKFKRRNQERLNPRDVEYGTIEGLITTNVGDSTLADLLDHSCTSGSGSGLPFLVQRTVARQITLLECVGKGRYGEVWRGSWQGENVAVKIFSSRDEKSWFRETELYNTVMLRHENILGFIASDMTSRHSSTQLWLITHYHEMGSLYDYLQLTTLDTVSCLRIVLSIASGLAHLHIEIFGTQGKPAIAHRDLKSKNILVKKNGQCCIADLGLAVMHSQSTNQLDVGNNPRVGTKRYMAPEVLDETIQVDCFDSYKRVDIWAFGLVLWEVARRMVSNGIVEDYKPPFYDVVPNDPSFEDMRKVVCVDQQRPNIPNRWFSDPTLTSLAKLMKECWYQNPSARLTALRIKKTLTKIDNSLDKLKTDC.

The signal sequence occupies residues 1 to 20; sequence MVDGVMILPVLIMIALPSPS. Topologically, residues 21–123 are extracellular; the sequence is MEDEKPKVNP…FPGTQNFHLE (103 aa). A glycan (N-linked (GlcNAc...) asparagine) is linked at asparagine 102. A helical membrane pass occupies residues 124–146; sequence VGLIILSVVFAVCLLACLLGVAL. Residues 147–509 are Cytoplasmic-facing; the sequence is RKFKRRNQER…NSLDKLKTDC (363 aa). Positions 178-207 constitute a GS domain; the sequence is STLADLLDHSCTSGSGSGLPFLVQRTVARQ. Residues 208–502 form the Protein kinase domain; it reads ITLLECVGKG…KTLTKIDNSL (295 aa). ATP-binding positions include 214-222 and lysine 235; that span reads VGKGRYGEV. Aspartate 336 serves as the catalytic Proton acceptor. Serine 501 is subject to Phosphoserine.

It belongs to the protein kinase superfamily. TKL Ser/Thr protein kinase family. TGFB receptor subfamily. As to quaternary structure, interacts with FKBP1A. Interacts with FCHO1. Interacts with CLU. Interacts with type II receptors AMHR2 and ACVR2A. Interacts with BMP7. Interacts with GDF2/BMP9. Interacts with BMP6 (when glycosylated); the interaction may induce HAMP expression. Interacts with TSC22D1/TSC-22. Mg(2+) is required as a cofactor. Mn(2+) serves as cofactor. As to expression, expressed in normal parenchymal cells, endothelial cells, fibroblasts and tumor-derived epithelial cells.

It localises to the membrane. It carries out the reaction L-threonyl-[receptor-protein] + ATP = O-phospho-L-threonyl-[receptor-protein] + ADP + H(+). The catalysed reaction is L-seryl-[receptor-protein] + ATP = O-phospho-L-seryl-[receptor-protein] + ADP + H(+). Bone morphogenetic protein (BMP) type I receptor that is involved in a wide variety of biological processes, including bone, heart, cartilage, nervous, and reproductive system development and regulation. As a type I receptor, forms heterotetrameric receptor complexes with the type II receptors AMHR2, ACVR2A or ACVR2B. Upon binding of ligands such as BMP7 or GDF2/BMP9 to the heteromeric complexes, type II receptors transphosphorylate ACVR1 intracellular domain. In turn, ACVR1 kinase domain is activated and subsequently phosphorylates SMAD1/5/8 proteins that transduce the signal. In addition to its role in mediating BMP pathway-specific signaling, suppresses TGFbeta/activin pathway signaling by interfering with the binding of activin to its type II receptor. Besides canonical SMAD signaling, can activate non-canonical pathways such as p38 mitogen-activated protein kinases/MAPKs. May promote the expression of HAMP, potentially via its interaction with BMP6. The sequence is that of Activin receptor type-1 (ACVR1) from Homo sapiens (Human).